The following is a 958-amino-acid chain: Protein translocase subunit SecA (958 aa).

Residues glutamine 86, glycine 104–threonine 108, and aspartate 494 each bind ATP. Disordered regions lie at residues alanine 863–threonine 883 and glutamine 902–lysine 937. Residues cysteine 941, cysteine 943, cysteine 952, and histidine 953 each coordinate Zn(2+).

The protein belongs to the SecA family. As to quaternary structure, monomer and homodimer. Part of the essential Sec protein translocation apparatus which comprises SecA, SecYEG and auxiliary proteins SecDF. Other proteins may also be involved. Requires Zn(2+) as cofactor.

Its subcellular location is the cell membrane. It is found in the cytoplasm. The enzyme catalyses ATP + H2O + cellular proteinSide 1 = ADP + phosphate + cellular proteinSide 2.. Its function is as follows. Part of the Sec protein translocase complex. Interacts with the SecYEG preprotein conducting channel. Has a central role in coupling the hydrolysis of ATP to the transfer of proteins into and across the cell membrane, serving as an ATP-driven molecular motor driving the stepwise translocation of polypeptide chains across the membrane. In Bifidobacterium adolescentis (strain ATCC 15703 / DSM 20083 / NCTC 11814 / E194a), this protein is Protein translocase subunit SecA.